We begin with the raw amino-acid sequence, 154 residues long: Calmodulin-like protein 4 (154 aa).

EF-hand domains follow at residues glutamate 7–glutamate 42, proline 43–aspartate 78, aspartate 80–lysine 115, and methionine 116–lysine 151. Residues aspartate 20, asparagine 22, aspartate 24, cysteine 26, glutamate 31, aspartate 56, aspartate 58, asparagine 60, glutamate 67, aspartate 93, aspartate 95, asparagine 97, and glutamate 104 each contribute to the Ca(2+) site. Residue lysine 115 is modified to N6,N6,N6-trimethyllysine. Ca(2+)-binding residues include aspartate 129, aspartate 131, aspartate 133, glutamine 135, and glutamate 140.

This sequence belongs to the calmodulin family.

Its function is as follows. Potential calcium sensor. The chain is Calmodulin-like protein 4 (CML4) from Oryza sativa subsp. japonica (Rice).